A 289-amino-acid chain; its full sequence is Cell division protein ZipA (289 aa).

Position 1 (methionine 1) is a topological domain, periplasmic. A helical transmembrane segment spans residues 2 to 22 (DIGLREWLIVIGLIVIAGILF). Residues 23–289 (DGWRRMRGGK…HERRSLMQKR (267 aa)) are Cytoplasmic-facing. The tract at residues 66 to 141 (REPSFDEQDL…KEREKAPAVA (76 aa)) is disordered. Basic and acidic residues predominate over residues 81 to 99 (REAKERKGGKRQEEPRQGD). Residues 100 to 114 (LDLDEGLALEADPSD) show a composition bias toward acidic residues.

Belongs to the ZipA family. As to quaternary structure, interacts with FtsZ via their C-terminal domains.

It localises to the cell inner membrane. In terms of biological role, essential cell division protein that stabilizes the FtsZ protofilaments by cross-linking them and that serves as a cytoplasmic membrane anchor for the Z ring. Also required for the recruitment to the septal ring of downstream cell division proteins. This chain is Cell division protein ZipA, found in Pseudomonas aeruginosa (strain LESB58).